The primary structure comprises 381 residues: Cytosolic acyl coenzyme A thioester hydrolase (381 aa).

Residues 51–169 enclose the HotDog ACOT-type 1 domain; sequence LGHCVTMGRI…TLWYVPLSLK (119 aa). N67 is a catalytic residue. 2 positions are modified to N6-acetyllysine: K169 and K199. The 115-residue stretch at 225-339 folds into the HotDog ACOT-type 2 domain; sequence SYSQSSLIHL…FFTYVSLNQE (115 aa). Residue D256 is part of the active site. An N6-acetyllysine modification is found at K284. Residues 342-381 form a disordered region; that stretch reads PMPVPQLVPETEDEKKRFEEGKGRYLQMKAKRQGHTEPQP. The span at 354 to 364 shows a compositional bias: basic and acidic residues; the sequence is DEKKRFEEGKG.

As to quaternary structure, homohexamer. As to expression, widely expressed with highest levels in brain. High levels also found in thymus, large intestine and testis. Negligible in muscle and adipose tissue. In the central and peripheral nervous systems, displays a predominantly neuronal localization with highest expression in cell bodies and neurites.

It is found in the cytoplasm. It localises to the cytosol. The enzyme catalyses hexadecanoyl-CoA + H2O = hexadecanoate + CoA + H(+). It carries out the reaction dodecanoyl-CoA + H2O = dodecanoate + CoA + H(+). It catalyses the reaction tetradecanoyl-CoA + H2O = tetradecanoate + CoA + H(+). The catalysed reaction is decanoyl-CoA + H2O = decanoate + CoA + H(+). The enzyme catalyses octanoyl-CoA + H2O = octanoate + CoA + H(+). It carries out the reaction octadecanoyl-CoA + H2O = octadecanoate + CoA + H(+). It catalyses the reaction (9Z)-octadecenoyl-CoA + H2O = (9Z)-octadecenoate + CoA + H(+). The protein operates within lipid metabolism; fatty acid metabolism. Its function is as follows. Catalyzes the hydrolysis of acyl-CoAs into free fatty acids and coenzyme A (CoASH), regulating their respective intracellular levels. Preferentially hydrolyzes palmitoyl-CoA, but has a broad specificity acting on other fatty acyl-CoAs with chain-lengths of C8-C18. May play an important physiological function in brain. The chain is Cytosolic acyl coenzyme A thioester hydrolase (Acot7) from Mus musculus (Mouse).